A 76-amino-acid polypeptide reads, in one-letter code: Sec-independent protein translocase protein TatA (76 aa).

The chain crosses the membrane as a helical span at residues 1-21 (MGGLSIWHWLIVLLIVALVFG). A disordered region spans residues 43-76 (MKDGDAPADAQQLPRSGTVDVNAKEATRSDSNKA). Residues 64–76 (NAKEATRSDSNKA) show a composition bias toward basic and acidic residues.

The protein belongs to the TatA/E family. The Tat system comprises two distinct complexes: a TatABC complex, containing multiple copies of TatA, TatB and TatC subunits, and a separate TatA complex, containing only TatA subunits. Substrates initially bind to the TatABC complex, which probably triggers association of the separate TatA complex to form the active translocon.

It is found in the cell inner membrane. In terms of biological role, part of the twin-arginine translocation (Tat) system that transports large folded proteins containing a characteristic twin-arginine motif in their signal peptide across membranes. TatA could form the protein-conducting channel of the Tat system. This Burkholderia multivorans (strain ATCC 17616 / 249) protein is Sec-independent protein translocase protein TatA.